Here is a 491-residue protein sequence, read N- to C-terminus: Probable G-protein coupled receptor Mth-like 7 (491 aa).

An N-terminal signal peptide occupies residues 1–22; it reads MRLPWVIFCTVLLLIFTNNSNA. Asparagine 18 and asparagine 42 each carry an N-linked (GlcNAc...) asparagine glycan. The Extracellular segment spans residues 23-167; that stretch reads DIPGCNYYDT…EEVSIQIFNK (145 aa). 3 cysteine pairs are disulfide-bonded: cysteine 27-cysteine 80, cysteine 82-cysteine 87, and cysteine 92-cysteine 103. A helical membrane pass occupies residues 168–188; that stretch reads CGLIVWFQDGKFWVTVDLFME. Residues 189 to 222 are Cytoplasmic-facing; it reads KQDYCLYRHNFDSDFPKSMWIIRHRCTSHISPGS. The helical transmembrane segment at 223 to 243 threads the bilayer; that stretch reads LEILIITMICFVLTIAVYLYI. The Extracellular segment spans residues 244–252; sequence KKLRNVTGK. Asparagine 248 carries an N-linked (GlcNAc...) asparagine glycan. A helical transmembrane segment spans residues 253 to 273; that stretch reads CIVCCIVSRFIQCLIMILDHL. The Cytoplasmic portion of the chain corresponds to 274 to 325; it reads NLLNGICSPAGYSSHFFRMASNLWLSVISYHTWKVLTSLNRVDPNYRFLRYN. Residues 326–346 form a helical membrane-spanning segment; the sequence is AFVWSTAAIMTGSIYIVNQIW. Topologically, residues 347–372 are extracellular; the sequence is ENDPSKWNWLPLVGFIRCSVKDWHPS. Residues 373–393 traverse the membrane as a helical segment; that stretch reads VWIYISGPSLALSTFNVAMFA. Topologically, residues 394–434 are cytoplasmic; it reads LTAIYIRKVKGGINKFTNEEEGRINCINFDSQTYLQFLRLS. Residues 435 to 455 form a helical membrane-spanning segment; sequence IVMGLTWIFNVIPYSARLHIF. Residues 456-458 lie on the Extracellular side of the membrane; that stretch reads WEW. Residues 459–479 form a helical membrane-spanning segment; the sequence is VGIISEYFHSAFGIVLFVLLV. Residues 480–491 lie on the Cytoplasmic side of the membrane; the sequence is LKRSTWTLMMDS.

This sequence belongs to the G-protein coupled receptor 2 family. Mth subfamily.

It localises to the cell membrane. The chain is Probable G-protein coupled receptor Mth-like 7 (mthl7) from Drosophila melanogaster (Fruit fly).